The following is a 261-amino-acid chain: Proteasome subunit alpha type-4 (261 aa).

A phosphoserine mark is found at Ser13 and Ser75. Lys127 carries the N6-acetyllysine modification. Ser173 carries the phosphoserine modification. At Lys176 the chain carries N6-acetyllysine. The segment at His240–Lys261 is disordered.

Belongs to the peptidase T1A family. The 26S proteasome consists of a 20S proteasome core and two 19S regulatory subunits. The 20S proteasome core is a barrel-shaped complex made of 28 subunits that are arranged in four stacked rings. The two outer rings are each formed by seven alpha subunits, and the two inner rings are formed by seven beta subunits. The proteolytic activity is exerted by three beta-subunits PSMB5, PSMB6 and PSMB7.

It localises to the cytoplasm. It is found in the nucleus. In terms of biological role, component of the 20S core proteasome complex involved in the proteolytic degradation of most intracellular proteins. This complex plays numerous essential roles within the cell by associating with different regulatory particles. Associated with two 19S regulatory particles, forms the 26S proteasome and thus participates in the ATP-dependent degradation of ubiquitinated proteins. The 26S proteasome plays a key role in the maintenance of protein homeostasis by removing misfolded or damaged proteins that could impair cellular functions, and by removing proteins whose functions are no longer required. Associated with the PA200 or PA28, the 20S proteasome mediates ubiquitin-independent protein degradation. This type of proteolysis is required in several pathways including spermatogenesis (20S-PA200 complex) or generation of a subset of MHC class I-presented antigenic peptides (20S-PA28 complex). This is Proteasome subunit alpha type-4 (PSMA4) from Macaca fascicularis (Crab-eating macaque).